The sequence spans 299 residues: Phosphoribosylaminoimidazole-succinocarboxamide synthase (299 aa).

The interval 259-279 is disordered; it reads PESGWDRKSEQPPPPLPQHVV.

This sequence belongs to the SAICAR synthetase family.

It catalyses the reaction 5-amino-1-(5-phospho-D-ribosyl)imidazole-4-carboxylate + L-aspartate + ATP = (2S)-2-[5-amino-1-(5-phospho-beta-D-ribosyl)imidazole-4-carboxamido]succinate + ADP + phosphate + 2 H(+). It functions in the pathway purine metabolism; IMP biosynthesis via de novo pathway; 5-amino-1-(5-phospho-D-ribosyl)imidazole-4-carboxamide from 5-amino-1-(5-phospho-D-ribosyl)imidazole-4-carboxylate: step 1/2. This is Phosphoribosylaminoimidazole-succinocarboxamide synthase from Streptomyces avermitilis (strain ATCC 31267 / DSM 46492 / JCM 5070 / NBRC 14893 / NCIMB 12804 / NRRL 8165 / MA-4680).